Reading from the N-terminus, the 329-residue chain is DNA-directed RNA polymerase subunit alpha (329 aa).

The segment at 1-231 (MQTTLLKPKT…EQLAVFAQLE (231 aa)) is alpha N-terminal domain (alpha-NTD). Residues 249-329 (FDPILLRPVD…SWPPAGLDKR (81 aa)) are alpha C-terminal domain (alpha-CTD).

The protein belongs to the RNA polymerase alpha chain family. As to quaternary structure, homodimer. The RNAP catalytic core consists of 2 alpha, 1 beta, 1 beta' and 1 omega subunit. When a sigma factor is associated with the core the holoenzyme is formed, which can initiate transcription.

It carries out the reaction RNA(n) + a ribonucleoside 5'-triphosphate = RNA(n+1) + diphosphate. In terms of biological role, DNA-dependent RNA polymerase catalyzes the transcription of DNA into RNA using the four ribonucleoside triphosphates as substrates. The polypeptide is DNA-directed RNA polymerase subunit alpha (Variovorax paradoxus (strain S110)).